The chain runs to 592 residues: Alpha-1,3-galactosidase B (592 aa).

Positions 1-14 are cleaved as a signal peptide; that stretch reads MKLLSVLSLSLVLS. Residue cysteine 15 is the site of N-palmitoyl cysteine attachment. Cysteine 15 is lipidated: S-diacylglycerol cysteine. PbH1 repeat units follow at residues 429 to 451, 452 to 474, and 485 to 538; these read TPEV…LFST, PRKT…LLCG, and CRHV…VIED.

This sequence belongs to the glycosyl hydrolase 110 family. B subfamily.

The protein resides in the cell membrane. The enzyme catalyses Hydrolysis of terminal, non-reducing branched (1-&gt;3)-alpha-D-galactosidic residues, producing free D-galactose.. It carries out the reaction Hydrolysis of terminal, non-reducing linear (1-&gt;3)-alpha-D-galactosidic residues, producing free D-galactose.. It catalyses the reaction Hydrolysis of terminal, non-reducing alpha-D-galactose residues in alpha-D-galactosides, including galactose oligosaccharides, galactomannans and galactolipids.. In terms of biological role, alpha-galactosidase. Removes both branched alpha-1,3-linked galactose residues of blood group B antigens and linear alpha-1,3-linked galactose structures. This chain is Alpha-1,3-galactosidase B (glaB1), found in Phocaeicola vulgatus (strain ATCC 8482 / DSM 1447 / JCM 5826 / CCUG 4940 / NBRC 14291 / NCTC 11154) (Bacteroides vulgatus).